A 93-amino-acid polypeptide reads, in one-letter code: MIMDLQFFSHHKGGGSTANGRNSAGRRLGTKAADGSIVTAGSIIYRQRGTHINPGENVGRGGDDTLYAKVAGVVKFERMGRSKRKVSVYPVAE.

The propeptide occupies 1–8; sequence MIMDLQFF. Positions 8 to 29 are disordered; the sequence is FSHHKGGGSTANGRNSAGRRLG.

It belongs to the bacterial ribosomal protein bL27 family. Post-translationally, the N-terminus is cleaved by ribosomal processing cysteine protease Prp.

This Limosilactobacillus reuteri (strain DSM 20016) (Lactobacillus reuteri) protein is Large ribosomal subunit protein bL27.